We begin with the raw amino-acid sequence, 307 residues long: Probable RuBisCO transcriptional regulator (307 aa).

Positions 4-61 (FTLQQLRILKAVATEKNFTKAAELLYLSQPSLSKQIKTLEKNLDILLVNRENNKISLT) constitute an HTH lysR-type domain. A DNA-binding region (H-T-H motif) is located at residues 21-40 (FTKAAELLYLSQPSLSKQIK).

Belongs to the LysR transcriptional regulatory family.

The protein resides in the plastid. The protein localises to the chloroplast. In terms of biological role, trans-acting transcriptional regulator of RuBisCO genes (rbcL and rbcS) expression. The chain is Probable RuBisCO transcriptional regulator (rbcR) from Phaeodactylum tricornutum (strain CCAP 1055/1).